Consider the following 586-residue polypeptide: Dual specificity tyrosine-phosphorylation-regulated kinase 3 (586 aa).

Over residues M1 to A13 the composition is skewed to basic and acidic residues. The segment at M1–G187 is disordered. The Protein kinase domain maps to Y208–I521. ATP-binding positions include I214 to V222, K237, and F287 to L290. Catalysis depends on D334, which acts as the Proton acceptor. Y368 is modified (phosphotyrosine). The short motif at R467–K480 is the Nuclear localization signal element.

This sequence belongs to the protein kinase superfamily. CMGC Ser/Thr protein kinase family. MNB/DYRK subfamily. Interacts with SIRT1. It depends on Mg(2+) as a cofactor. Ubiquitinated at anaphase by the anaphase-promoting complex (APC/C), leading to its degradation by the proteasome. Post-translationally, protein kinase activity is activated following autophosphorylation at Tyr-368.

The protein resides in the nucleus. Its subcellular location is the cytoplasm. The protein localises to the nucleus speckle. It is found in the cytoplasmic granule. It localises to the cytoskeleton. The protein resides in the microtubule organizing center. Its subcellular location is the centrosome. It carries out the reaction L-seryl-[protein] + ATP = O-phospho-L-seryl-[protein] + ADP + H(+). The catalysed reaction is L-threonyl-[protein] + ATP = O-phospho-L-threonyl-[protein] + ADP + H(+). The enzyme catalyses L-tyrosyl-[protein] + ATP = O-phospho-L-tyrosyl-[protein] + ADP + H(+). With respect to regulation, protein kinase activity is activated following autophosphorylation at Tyr-368. In terms of biological role, dual-specificity protein kinase that promotes disassembly of several types of membraneless organelles during mitosis, such as stress granules, nuclear speckles and pericentriolar material. Dual-specificity tyrosine-regulated kinases (DYRKs) autophosphorylate a critical tyrosine residue in their activation loop and phosphorylate their substrate on serine and threonine residues. Acts as a central dissolvase of membraneless organelles during the G2-to-M transition, after the nuclear-envelope breakdown: acts by mediating phosphorylation of multiple serine and threonine residues in unstructured domains of proteins, such as SRRM1 and PCM1. Does not mediate disassembly of all membraneless organelles: disassembly of P-body and nucleolus is not regulated by DYRK3. Dissolution of membraneless organelles at the onset of mitosis is also required to release mitotic regulators, such as ZNF207, from liquid-unmixed organelles where they are sequestered and keep them dissolved during mitosis. Regulates mTORC1 by mediating the dissolution of stress granules: during stressful conditions, DYRK3 partitions from the cytosol to the stress granule, together with mTORC1 components, which prevents mTORC1 signaling. When stress signals are gone, the kinase activity of DYRK3 is required for the dissolution of stress granule and mTORC1 relocation to the cytosol: acts by mediating the phosphorylation of the mTORC1 inhibitor AKT1S1, allowing full reactivation of mTORC1 signaling. Also acts as a negative regulator of EPO-dependent erythropoiesis: may place an upper limit on red cell production during stress erythropoiesis. Inhibits cell death due to cytokine withdrawal in hematopoietic progenitor cells. Promotes cell survival upon genotoxic stress through phosphorylation of SIRT1: this in turn inhibits p53/TP53 activity and apoptosis. This chain is Dual specificity tyrosine-phosphorylation-regulated kinase 3, found in Mus musculus (Mouse).